Here is a 688-residue protein sequence, read N- to C-terminus: Elongation factor G (688 aa).

Residues 8-282 (EKTRNIGIIA…AIVDYLPAPC (275 aa)) enclose the tr-type G domain. Residues 17-24 (AHIDAGKT), 81-85 (DTPGH), and 135-138 (NKMD) contribute to the GTP site.

The protein belongs to the TRAFAC class translation factor GTPase superfamily. Classic translation factor GTPase family. EF-G/EF-2 subfamily.

Its subcellular location is the cytoplasm. Its function is as follows. Catalyzes the GTP-dependent ribosomal translocation step during translation elongation. During this step, the ribosome changes from the pre-translocational (PRE) to the post-translocational (POST) state as the newly formed A-site-bound peptidyl-tRNA and P-site-bound deacylated tRNA move to the P and E sites, respectively. Catalyzes the coordinated movement of the two tRNA molecules, the mRNA and conformational changes in the ribosome. This is Elongation factor G from Onion yellows phytoplasma (strain OY-M).